Reading from the N-terminus, the 409-residue chain is 5-aminolevulinate synthase (409 aa).

Positions 21, 137, and 156 each coordinate substrate. Residues Ser189, His217, and Thr245 each contribute to the pyridoxal 5'-phosphate site. Lys248 is an active-site residue. N6-(pyridoxal phosphate)lysine is present on Lys248. Residues Thr277 and Thr278 each contribute to the pyridoxal 5'-phosphate site. Thr365 serves as a coordination point for substrate.

It belongs to the class-II pyridoxal-phosphate-dependent aminotransferase family. As to quaternary structure, homodimer. The cofactor is pyridoxal 5'-phosphate.

It carries out the reaction succinyl-CoA + glycine + H(+) = 5-aminolevulinate + CO2 + CoA. The protein operates within porphyrin-containing compound metabolism; protoporphyrin-IX biosynthesis; 5-aminolevulinate from glycine: step 1/1. The protein is 5-aminolevulinate synthase (hemA) of Paracoccus denitrificans (strain Pd 1222).